The chain runs to 314 residues: DNA-directed RNA polymerase subunit alpha (314 aa).

The alpha N-terminal domain (alpha-NTD) stretch occupies residues Met1–Thr228. Residues Glu246 to Asp314 are alpha C-terminal domain (alpha-CTD).

The protein belongs to the RNA polymerase alpha chain family. As to quaternary structure, homodimer. The RNAP catalytic core consists of 2 alpha, 1 beta, 1 beta' and 1 omega subunit. When a sigma factor is associated with the core the holoenzyme is formed, which can initiate transcription.

It carries out the reaction RNA(n) + a ribonucleoside 5'-triphosphate = RNA(n+1) + diphosphate. Functionally, DNA-dependent RNA polymerase catalyzes the transcription of DNA into RNA using the four ribonucleoside triphosphates as substrates. The chain is DNA-directed RNA polymerase subunit alpha from Bacillus velezensis (strain DSM 23117 / BGSC 10A6 / LMG 26770 / FZB42) (Bacillus amyloliquefaciens subsp. plantarum).